The chain runs to 229 residues: Large ribosomal subunit protein uL1 (229 aa).

Belongs to the universal ribosomal protein uL1 family. In terms of assembly, part of the 50S ribosomal subunit.

Its function is as follows. Binds directly to 23S rRNA. The L1 stalk is quite mobile in the ribosome, and is involved in E site tRNA release. Functionally, protein L1 is also a translational repressor protein, it controls the translation of the L11 operon by binding to its mRNA. This is Large ribosomal subunit protein uL1 from Ureaplasma parvum serovar 3 (strain ATCC 27815 / 27 / NCTC 11736).